The primary structure comprises 447 residues: Secretin receptor (447 aa).

An N-terminal signal peptide occupies residues 1-28 (MLSTMSPRLSLLLLWLLLLINAAHPVGA). Residues 29 to 140 (LPRLCDVRRV…NERRHAYLLK (112 aa)) are Extracellular-facing. 3 disulfides stabilise this stretch: Cys46–Cys74, Cys65–Cys106, and Cys88–Cys122. N-linked (GlcNAc...) asparagine glycosylation is found at Asn71, Asn99, Asn105, and Asn127. The chain crosses the membrane as a helical span at residues 141 to 166 (LKVMYTVGYSSSLAMLLVALSILCSF). Residues 167 to 173 (RRLHCTR) lie on the Cytoplasmic side of the membrane. Residues 174-194 (NYIHMHLFVSFILRALSNFIK) form a helical membrane-spanning segment. Residues 195–215 (DAVLFPADDVTYCDAHRAGCK) lie on the Extracellular side of the membrane. Cys214 and Cys284 form a disulfide bridge. Residues 216-238 (LVMIFFQYCIMANYAWLLVEGLY) traverse the membrane as a helical segment. At 239-253 (LHTLLAISFFSERKC) the chain is on the cytoplasmic side. The chain crosses the membrane as a helical span at residues 254-275 (LQAFVLFGWGSPAIFVALWAVT). At 276–290 (RHFLEDFGCWDINSN) the chain is on the extracellular side. Asn290 is a glycosylation site (N-linked (GlcNAc...) asparagine). Residues 291–314 (ASIWWVIRGPVILSIVINFIFFIN) traverse the membrane as a helical segment. The Cytoplasmic segment spans residues 315–339 (ILRILMRKLRTQETRGNETHHYKRL). Residues 340–355 (AKSTLLLIPLFGIHYI) form a helical membrane-spanning segment. The Extracellular portion of the chain corresponds to 356–366 (VFAFSPEGAME). A helical transmembrane segment spans residues 367–390 (VQLFFELALGSFQGLVVAVLYCFL). The Cytoplasmic segment spans residues 391-447 (NGELEVQKKWRQWHLQEFPLRPVALSNSFSNATNGPTHSTKAGTSEQSRSIPGANVI). The segment covering 423 to 440 (TNGPTHSTKAGTSEQSRS) has biased composition (polar residues). Positions 423 to 447 (TNGPTHSTKAGTSEQSRSIPGANVI) are disordered.

This sequence belongs to the G-protein coupled receptor 2 family. In terms of processing, phosphorylated on Ser and Thr residues at the cytoplasmic C-terminus by G protein-coupled receptor kinases (GRKs). In brain, expressed in the hippocampal CA1 region, the lower layer of cerebral cortex, the anterior olfactory nuclei, the anterior ventrolateral thalamus, the lateral region of hypothalamus, substantia nigra, tegmental area and central nucleus of the inferior colliculus, the ventral supramamillary nucleus and the cerebellum. Expressed in brown adipocytes: expression predominates in mature brown adipocytes (at protein level). Detected in the renal medulla, where it localized predominantly on the basolateral membranes of cells in the collecting ducts (blue arrow) and the ascending thick segments of the loop of Henle.

Its subcellular location is the cell membrane. The protein localises to the basolateral cell membrane. G protein-coupled receptor activated by secretin (SCT), which is involved in different processes such as regulation of the pH of the duodenal content, food intake and water homeostasis. Ligand binding causes a conformation change that triggers signaling via guanine nucleotide-binding proteins (G proteins) and activates cAMP-dependent pathway. Upon binding to secretin, regulates the pH of the duodenum by (1) inhibiting the secretion of gastric acid from the parietal cells of the stomach and (2) stimulating the production of bicarbonate (NaHCO(3)) from the ductal cells of the pancreas. In addition to regulating the pH of the duodenal content, plays a central role in diet induced thermogenesis: acts as a non-sympathetic brown fat (BAT) activator mediating prandial thermogenesis, which consequentially induces satiation. Mechanistically, secretin released by the gut after a meal binds to secretin receptor (SCTR) in brown adipocytes, activating brown fat thermogenesis by stimulating lipolysis, which is sensed in the brain and promotes satiation. Also able to stimulate lipolysis in white adipocytes. Also plays an important role in cellular osmoregulation by regulating renal water reabsorption. Also plays a role in the central nervous system: required for synaptic plasticity. The chain is Secretin receptor from Mus musculus (Mouse).